Here is a 537-residue protein sequence, read N- to C-terminus: Inositol phosphorylceramide glucuronosyltransferase 1 (537 aa).

The chain crosses the membrane as a helical span at residues 6 to 26 (TSLWVLLLALVSIQLNGSFGS). Positions 124 and 126 each coordinate Mn(2+). Substrate-binding positions include 124–126 (DAD), 153–155 (NSG), 180–184 (TGGDQ), and 248–255 (HYTLGPLK). A Mn(2+)-binding site is contributed by histidine 248. Helical transmembrane passes span 293-313 (DELV…FCIY), 375-395 (VSVV…FAIV), 406-426 (VLVY…FLLF), 468-488 (MAFL…TALF), and 494-514 (MVGL…HLAV).

The protein belongs to the glycosyltransferase 8 family. Glycogenin subfamily. It depends on Mn(2+) as a cofactor. As to expression, expressed in seedlings, roots, leaves, stems and siliques.

The protein resides in the golgi apparatus membrane. It catalyses the reaction glucuronate acceptor + UDP-alpha-D-glucuronate = acceptor beta-D-glucuronoside + UDP + H(+). The catalysed reaction is a 1D-myo-inositol-1-phospho-N-[(R)-2-hydroxy-very-long-chain fatty acyl]-(R)-4-hydroxysphingoid base + UDP-alpha-D-glucuronate = an alpha-D-glucuronosyl-(1&lt;-&gt;6)-1D-myo-inositol-1-phospho-N-[(R)-2-hydroxy-very-long-chain fatty acyl]-(R)-4-hydroxysphingoid base + UDP + H(+). The protein operates within sphingolipid metabolism. Mediates the transfer of glucuronic acid (GlcA) from UDP-GlcA to glycosyl inositol phosphorylceramides (GIPCs). The formation of GIPCs sphingolipids is essential for pollen function, plant growth and defense. Required for global fitness. This chain is Inositol phosphorylceramide glucuronosyltransferase 1, found in Arabidopsis thaliana (Mouse-ear cress).